An 89-amino-acid chain; its full sequence is Small ribosomal subunit protein uS15 (89 aa).

Residues 1-23 (MTLNTQEKQKLINTHQNHGTDTG) form a disordered region.

It belongs to the universal ribosomal protein uS15 family. Part of the 30S ribosomal subunit. Forms a bridge to the 50S subunit in the 70S ribosome, contacting the 23S rRNA.

In terms of biological role, one of the primary rRNA binding proteins, it binds directly to 16S rRNA where it helps nucleate assembly of the platform of the 30S subunit by binding and bridging several RNA helices of the 16S rRNA. Its function is as follows. Forms an intersubunit bridge (bridge B4) with the 23S rRNA of the 50S subunit in the ribosome. The protein is Small ribosomal subunit protein uS15 of Prochlorococcus marinus (strain MIT 9211).